A 69-amino-acid polypeptide reads, in one-letter code: Pleurain-A2 (69 aa).

The first 22 residues, 1–22 (MFTLKKTLLLLYFLGTISISLC), serve as a signal peptide directing secretion. Residues 23 to 43 (KQERDADEDDGRKMTEEEVKR) constitute a propeptide that is removed on maturation. C63 and C69 are joined by a disulfide.

As to expression, expressed by the skin glands.

Its subcellular location is the secreted. Functionally, antimicrobial peptide. Has activity against the Gram-positive bacterium S.aureus ATCC2592 (MIC=15 ug/ml), the Gram-negative bacteria E.coli ATCC25922 (MIC=60 ug/ml), B.dysenteriae (MIC=60 ug/ml), H.pylori NTCT11637 (MIC=30 ug/ml), and the fungus C.albicans ATCC2002 (MIC=30 ug/ml). Has little hemolytic activity on rabbit red blood cells. This chain is Pleurain-A2, found in Nidirana pleuraden (Yunnan pond frog).